The sequence spans 706 residues: Polyribonucleotide nucleotidyltransferase (706 aa).

The Mg(2+) site is built by Asp490 and Asp496. The region spanning 556 to 615 (PRIETMQIPTDKIREVIGSGGKVIREIVEVSGAKVDINDEGIIKIASPNGDSIQKAYDMI) is the KH domain. The 69-residue stretch at 625 to 693 (GKIYKGKVVK…DRGKVRLAMK (69 aa)) folds into the S1 motif domain.

Belongs to the polyribonucleotide nucleotidyltransferase family. The cofactor is Mg(2+).

Its subcellular location is the cytoplasm. The enzyme catalyses RNA(n+1) + phosphate = RNA(n) + a ribonucleoside 5'-diphosphate. Involved in mRNA degradation. Catalyzes the phosphorolysis of single-stranded polyribonucleotides processively in the 3'- to 5'-direction. This Jannaschia sp. (strain CCS1) protein is Polyribonucleotide nucleotidyltransferase.